The chain runs to 178 residues: ATP synthase subunit delta (178 aa).

The protein belongs to the ATPase delta chain family. F-type ATPases have 2 components, F(1) - the catalytic core - and F(0) - the membrane proton channel. F(1) has five subunits: alpha(3), beta(3), gamma(1), delta(1), epsilon(1). F(0) has three main subunits: a(1), b(2) and c(10-14). The alpha and beta chains form an alternating ring which encloses part of the gamma chain. F(1) is attached to F(0) by a central stalk formed by the gamma and epsilon chains, while a peripheral stalk is formed by the delta and b chains.

The protein localises to the cell inner membrane. Functionally, f(1)F(0) ATP synthase produces ATP from ADP in the presence of a proton or sodium gradient. F-type ATPases consist of two structural domains, F(1) containing the extramembraneous catalytic core and F(0) containing the membrane proton channel, linked together by a central stalk and a peripheral stalk. During catalysis, ATP synthesis in the catalytic domain of F(1) is coupled via a rotary mechanism of the central stalk subunits to proton translocation. This protein is part of the stalk that links CF(0) to CF(1). It either transmits conformational changes from CF(0) to CF(1) or is implicated in proton conduction. This chain is ATP synthase subunit delta, found in Thioalkalivibrio sulfidiphilus (strain HL-EbGR7).